Reading from the N-terminus, the 185-residue chain is Adenine phosphoribosyltransferase (185 aa).

The protein belongs to the purine/pyrimidine phosphoribosyltransferase family. As to quaternary structure, homodimer.

The protein resides in the cytoplasm. The catalysed reaction is AMP + diphosphate = 5-phospho-alpha-D-ribose 1-diphosphate + adenine. The protein operates within purine metabolism; AMP biosynthesis via salvage pathway; AMP from adenine: step 1/1. In terms of biological role, catalyzes a salvage reaction resulting in the formation of AMP, that is energically less costly than de novo synthesis. This is Adenine phosphoribosyltransferase from Rubrobacter xylanophilus (strain DSM 9941 / JCM 11954 / NBRC 16129 / PRD-1).